Here is a 311-residue protein sequence, read N- to C-terminus: MSVVNNRVALTNLVSMEALTTEEVLGLINRGSEYKAGKVVISDHQKDLVANLFFENSTRTHKSFEVAEKKLGLTVLDFNADASAVNKGESLYDTVLTMSALGTDICVIRHPEDDYYKELVESPTITASIVNGGDGSGQHPSQCLLDLLTIYEEFGHFEGLKIAIAGDLTHSRVAKSNMQILKRLGAELYFYGPEEWYSEAFNAYGTYIAIDQIIKELDVLMLLRVQHERHDGHQSFSKEGYHQAFGLTQERYQQLKDSAIIMHPAPVNRDVEIADSLVEAPKARIVSQMANGVFVRMAIIEAILNGRNKNS.

Arginine 59 and threonine 60 together coordinate carbamoyl phosphate. L-aspartate is bound at residue lysine 87. Carbamoyl phosphate-binding residues include arginine 109, histidine 139, and glutamine 142. Residues arginine 172 and arginine 224 each coordinate L-aspartate. Residues alanine 265 and proline 266 each coordinate carbamoyl phosphate.

It belongs to the aspartate/ornithine carbamoyltransferase superfamily. ATCase family. As to quaternary structure, heterododecamer (2C3:3R2) of six catalytic PyrB chains organized as two trimers (C3), and six regulatory PyrI chains organized as three dimers (R2).

The catalysed reaction is carbamoyl phosphate + L-aspartate = N-carbamoyl-L-aspartate + phosphate + H(+). Its pathway is pyrimidine metabolism; UMP biosynthesis via de novo pathway; (S)-dihydroorotate from bicarbonate: step 2/3. In terms of biological role, catalyzes the condensation of carbamoyl phosphate and aspartate to form carbamoyl aspartate and inorganic phosphate, the committed step in the de novo pyrimidine nucleotide biosynthesis pathway. This Streptococcus pyogenes serotype M12 (strain MGAS2096) protein is Aspartate carbamoyltransferase catalytic subunit.